A 155-amino-acid polypeptide reads, in one-letter code: Small ribosomal subunit protein uS7 (155 aa).

It belongs to the universal ribosomal protein uS7 family. Part of the 30S ribosomal subunit. Contacts proteins S9 and S11.

Functionally, one of the primary rRNA binding proteins, it binds directly to 16S rRNA where it nucleates assembly of the head domain of the 30S subunit. Is located at the subunit interface close to the decoding center, probably blocks exit of the E-site tRNA. This is Small ribosomal subunit protein uS7 from Kosmotoga olearia (strain ATCC BAA-1733 / DSM 21960 / TBF 19.5.1).